Consider the following 288-residue polypeptide: UDP-3-O-acyl-N-acetylglucosamine deacetylase (288 aa).

The Zn(2+) site is built by H79, H236, and D240. H263 functions as the Proton donor in the catalytic mechanism.

Belongs to the LpxC family. Zn(2+) is required as a cofactor.

It catalyses the reaction a UDP-3-O-[(3R)-3-hydroxyacyl]-N-acetyl-alpha-D-glucosamine + H2O = a UDP-3-O-[(3R)-3-hydroxyacyl]-alpha-D-glucosamine + acetate. It participates in glycolipid biosynthesis; lipid IV(A) biosynthesis; lipid IV(A) from (3R)-3-hydroxytetradecanoyl-[acyl-carrier-protein] and UDP-N-acetyl-alpha-D-glucosamine: step 2/6. Catalyzes the hydrolysis of UDP-3-O-myristoyl-N-acetylglucosamine to form UDP-3-O-myristoylglucosamine and acetate, the committed step in lipid A biosynthesis. The sequence is that of UDP-3-O-acyl-N-acetylglucosamine deacetylase from Rickettsia conorii (strain ATCC VR-613 / Malish 7).